Consider the following 314-residue polypeptide: Glucocorticoid receptor (314 aa).

Positions 1-44 (ASAAVSAAPTEKEFPKTHSDVSSEQQNLKGQKGSNGGSMKLHTT) are disordered. Residues 1-281 (ASAAVSAAPT…SAATGPPPKL (281 aa)) form a modulating region. Residues 10–21 (TEKEFPKTHSDV) show a composition bias toward basic and acidic residues. Phosphoserine is present on residues S65, S73, and S88. K120 is covalently cross-linked (Glycyl lysine isopeptide (Lys-Gly) (interchain with G-Cter in SUMO2)). S129 is subject to Phosphoserine. Residues K139 and K155 each participate in a glycyl lysine isopeptide (Lys-Gly) (interchain with G-Cter in SUMO); alternate cross-link. Residues K139 and K155 each participate in a glycyl lysine isopeptide (Lys-Gly) (interchain with G-Cter in SUMO2); alternate cross-link. S266 is modified (phosphoserine). Residue K280 forms a Glycyl lysine isopeptide (Lys-Gly) (interchain with G-Cter in ubiquitin) linkage. The NR C4-type zinc finger occupies 282–314 (CLVCSDEASGCHYGVLTCGSCKVFFKRAVEGQH). The nuclear receptor DNA-binding region spans 282 to 314 (CLVCSDEASGCHYGVLTCGSCKVFFKRAVEGQH).

Belongs to the nuclear hormone receptor family. NR3 subfamily. Heteromultimeric cytoplasmic complex with HSP90AA1, HSPA1A/HSPA1B, and FKBP5 or another immunophilin such as PPID, STIP1, or the immunophilin homolog PPP5C. Upon ligand binding FKBP5 dissociates from the complex and FKBP4 takes its place, thereby linking the complex to dynein and mediating transport to the nucleus, where the complex dissociates. Probably forms a complex composed of chaperones HSP90 and HSP70, co-chaperones CDC37, PPP5C, TSC1 and client protein TSC2, CDK4, AKT, RAF1 and NR3C1; this complex does not contain co-chaperones STIP1/HOP and PTGES3/p23. Directly interacts with UNC45A. Binds to DNA as a homodimer, and as heterodimer with NR3C2 or the retinoid X receptor. Binds STAT5A and STAT5B homodimers and heterodimers. Interacts with NRIP1, POU2F1, POU2F2 and TRIM28. Interacts with several coactivator complexes, including the SMARCA4 complex, CREBBP/EP300, TADA2L (Ada complex) and p160 coactivators such as NCOA2 and NCOA6. Interaction with BAG1 inhibits transactivation. Interacts with HEXIM1 and TGFB1I1. Interacts with NCOA1. Interacts with NCOA3, SMARCA4, SMARCC1, SMARCD1, and SMARCE1. Interacts with CLOCK, CRY1 and CRY2 in a ligand-dependent fashion. Interacts with CIART. Interacts with RWDD3. Interacts with UBE2I/UBC9 and this interaction is enhanced in the presence of RWDD3. Interacts with GRIP1. Interacts with NR4A3 (via nuclear receptor DNA-binding domain), represses transcription activity of NR4A3 on the POMC promoter Nur response element (NurRE). Directly interacts with PNRC2 to attract and form a complex with UPF1 and DCP1A; the interaction leads to rapid mRNA degradation. Interacts with GSK3B. Interacts with FNIP1 and FNIP2. Interacts (via C-terminus) with HNRNPU (via C-terminus). Interacts with MCM3AP. Interacts (via domain NR LBD) with HSP90AA1 and HSP90AB1. In the absence of hormonal ligand, interacts with TACC1. Interacts (via NR LBD domain) with ZNF764 (via KRAB domain); the interaction regulates transcription factor activity of NR3C1 by directing its actions toward certain biologic pathways. In terms of processing, acetylation by CLOCK reduces its binding to glucocorticoid response elements and its transcriptional activity. Increased proteasome-mediated degradation in response to glucocorticoids. Post-translationally, phosphorylated in the absence of hormone; becomes hyperphosphorylated in the presence of glucocorticoid. The Ser-65, Ser-88 and Ser-266-phosphorylated forms are mainly cytoplasmic, and the Ser-73-phosphorylated form is nuclear. Phosphorylation at Ser-73 increases transcriptional activity. Phosphorylation at Ser-65, Ser-88 and Ser-266 decreases signaling capacity. Phosphorylation at Ser-266 may protect from glucocorticoid-induced apoptosis. Phosphorylation at Ser-65 and Ser-73 is not required in regulation of chromosome segregation. May be dephosphorylated by PPP5C, attenuates NR3C1 action. In terms of processing, ubiquitinated by UBR5, leading to its degradation: UBR5 specifically recognizes and binds ligand-bound NR3C1 when it is not associated with coactivators (NCOAs). In presence of NCOAs, the UBR5-degron is not accessible, preventing its ubiquitination and degradation. Sumoylation at Lys-139 and Lys-155 negatively regulates its transcriptional activity. Heat shock increases sumoylation in a RWDD3-dependent manner.

Its subcellular location is the cytoplasm. The protein localises to the nucleus. It is found in the mitochondrion. The protein resides in the cytoskeleton. It localises to the spindle. Its subcellular location is the microtubule organizing center. The protein localises to the centrosome. It is found in the chromosome. The protein resides in the nucleoplasm. In terms of biological role, receptor for glucocorticoids (GC). Has a dual mode of action: as a transcription factor that binds to glucocorticoid response elements (GRE), both for nuclear and mitochondrial DNA, and as a modulator of other transcription factors. Affects inflammatory responses, cellular proliferation and differentiation in target tissues. Involved in chromatin remodeling. Plays a role in rapid mRNA degradation by binding to the 5' UTR of target mRNAs and interacting with PNRC2 in a ligand-dependent manner which recruits the RNA helicase UPF1 and the mRNA-decapping enzyme DCP1A, leading to RNA decay. Could act as a coactivator for STAT5-dependent transcription upon growth hormone (GH) stimulation and could reveal an essential role of hepatic GR in the control of body growth. Mediates glucocorticoid-induced apoptosis. Promotes accurate chromosome segregation during mitosis. May act as a tumor suppressor. May play a negative role in adipogenesis through the regulation of lipolytic and antilipogenic gene expression. The protein is Glucocorticoid receptor (NR3C1) of Ovis aries (Sheep).